Here is a 177-residue protein sequence, read N- to C-terminus: Putative adenylate kinase (177 aa).

ATP-binding residues include glycine 10, glycine 12, lysine 13, threonine 14, and threonine 15. The tract at residues 30–50 (NLRDYALEKGIGEMKENELEI) is NMP. The tract at residues 99–109 (ERGYGREKLGE) is LID. 2 residues coordinate ATP: arginine 100 and lysine 138.

Belongs to the adenylate kinase family. AK6 subfamily. As to quaternary structure, interacts with uS11. Not a structural component of 40S pre-ribosomes, but transiently interacts with them by binding to uS11.

The enzyme catalyses AMP + ATP = 2 ADP. The catalysed reaction is ATP + H2O = ADP + phosphate + H(+). Its function is as follows. Broad-specificity nucleoside monophosphate (NMP) kinase that catalyzes the reversible transfer of the terminal phosphate group between nucleoside triphosphates and monophosphates. Also has ATPase activity. Involved in the late maturation steps of the 30S ribosomal particles, specifically 16S rRNA maturation. While NMP activity is not required for ribosome maturation, ATPase activity is. Associates transiently with small ribosomal subunit protein uS11. ATP hydrolysis breaks the interaction with uS11. May temporarily remove uS11 from the ribosome to enable a conformational change of the ribosomal RNA that is needed for the final maturation step of the small ribosomal subunit. The chain is Putative adenylate kinase from Thermococcus kodakarensis (strain ATCC BAA-918 / JCM 12380 / KOD1) (Pyrococcus kodakaraensis (strain KOD1)).